Here is a 68-residue protein sequence, read N- to C-terminus: UPF0253 protein VF_0662 (68 aa).

It belongs to the UPF0253 family.

The protein is UPF0253 protein VF_0662 of Aliivibrio fischeri (strain ATCC 700601 / ES114) (Vibrio fischeri).